The chain runs to 268 residues: Tryptophan synthase alpha chain (268 aa).

Active-site proton acceptor residues include E49 and D60.

It belongs to the TrpA family. In terms of assembly, tetramer of two alpha and two beta chains.

The enzyme catalyses (1S,2R)-1-C-(indol-3-yl)glycerol 3-phosphate + L-serine = D-glyceraldehyde 3-phosphate + L-tryptophan + H2O. The protein operates within amino-acid biosynthesis; L-tryptophan biosynthesis; L-tryptophan from chorismate: step 5/5. Its function is as follows. The alpha subunit is responsible for the aldol cleavage of indoleglycerol phosphate to indole and glyceraldehyde 3-phosphate. In Edwardsiella ictaluri (strain 93-146), this protein is Tryptophan synthase alpha chain.